The following is a 75-amino-acid chain: uncharacterized protein (75 aa).

The chain crosses the membrane as a helical span at residues 12 to 32 (LKVFILFTGFTALFYYAMIWV).

It localises to the cell membrane. This is an uncharacterized protein from Bacillus subtilis (strain 168).